A 777-amino-acid polypeptide reads, in one-letter code: uncharacterized protein (777 aa).

Disordered regions lie at residues 1–101 (MNNN…NLSN), 128–150 (SYNN…NDDN), 219–267 (HHIH…NNMN), 334–366 (SLPF…GIDD), 391–466 (ISNS…ATIS), 529–577 (KNLN…NNKG), 590–622 (LAQE…ISTI), and 713–751 (EKQG…KWKP). Low complexity-rich tracts occupy residues 128–147 (SYNN…NNIN) and 243–265 (NNNN…NHNN). A compositionally biased stretch (polar residues) spans 334–343 (SLPFSSLSDN). Residues 344 to 366 (NGDDDDDGIDDGIDDGIDDGIDD) show a composition bias toward acidic residues. The span at 391-407 (ISNSFHQNQSPCNNSFK) shows a compositional bias: polar residues. Low complexity-rich tracts occupy residues 408 to 466 (NNNN…ATIS) and 532 to 574 (NNNN…NNKN). Residues 597–606 (EQNKTKKELE) are compositionally biased toward basic and acidic residues. 2 stretches are compositionally biased toward acidic residues: residues 607–620 (EVKE…EEIS) and 718–730 (DDPE…DSDS). Positions 731–740 (DSNSNSDSSD) are enriched in low complexity.

This is an uncharacterized protein from Dictyostelium discoideum (Social amoeba).